The chain runs to 463 residues: tRNA-2-methylthio-N(6)-dimethylallyladenosine synthase (463 aa).

Positions 19-135 (GSYWITTFGC…LESLLNQVDS (117 aa)) constitute an MTTase N-terminal domain. Residues cysteine 28, cysteine 64, cysteine 98, cysteine 170, cysteine 174, and cysteine 177 each contribute to the [4Fe-4S] cluster site. In terms of domain architecture, Radical SAM core spans 156–393 (RDSSICGWVN…NSLVENIAKE (238 aa)). One can recognise a TRAM domain in the interval 396–463 (QRYKNTSQEI…RPFSLTAKLL (68 aa)).

It belongs to the methylthiotransferase family. MiaB subfamily. As to quaternary structure, monomer. Requires [4Fe-4S] cluster as cofactor.

It is found in the cytoplasm. It catalyses the reaction N(6)-dimethylallyladenosine(37) in tRNA + (sulfur carrier)-SH + AH2 + 2 S-adenosyl-L-methionine = 2-methylsulfanyl-N(6)-dimethylallyladenosine(37) in tRNA + (sulfur carrier)-H + 5'-deoxyadenosine + L-methionine + A + S-adenosyl-L-homocysteine + 2 H(+). In terms of biological role, catalyzes the methylthiolation of N6-(dimethylallyl)adenosine (i(6)A), leading to the formation of 2-methylthio-N6-(dimethylallyl)adenosine (ms(2)i(6)A) at position 37 in tRNAs that read codons beginning with uridine. The protein is tRNA-2-methylthio-N(6)-dimethylallyladenosine synthase of Prochlorococcus marinus (strain NATL2A).